The following is a 287-amino-acid chain: 4-hydroxybenzoate octaprenyltransferase (287 aa).

Helical transmembrane passes span 23 to 43, 46 to 66, 99 to 119, 141 to 161, 162 to 182, 213 to 233, 237 to 257, and 266 to 286; these read IGSL…GGTA, GKLL…GCVI, LFVL…AMTI, LPQV…YAAV, GESL…WTVA, LVIG…GDLN, GAYY…QQLI, and FRAF…ILLA.

The protein belongs to the UbiA prenyltransferase family. Mg(2+) serves as cofactor.

The protein localises to the cell inner membrane. It carries out the reaction all-trans-octaprenyl diphosphate + 4-hydroxybenzoate = 4-hydroxy-3-(all-trans-octaprenyl)benzoate + diphosphate. It functions in the pathway cofactor biosynthesis; ubiquinone biosynthesis. Functionally, catalyzes the prenylation of para-hydroxybenzoate (PHB) with an all-trans polyprenyl group. Mediates the second step in the final reaction sequence of ubiquinone-8 (UQ-8) biosynthesis, which is the condensation of the polyisoprenoid side chain with PHB, generating the first membrane-bound Q intermediate 3-octaprenyl-4-hydroxybenzoate. This chain is 4-hydroxybenzoate octaprenyltransferase, found in Edwardsiella ictaluri (strain 93-146).